Here is a 177-residue protein sequence, read N- to C-terminus: R-phycoerythrin beta chain (177 aa).

Residues Cys-50 and Cys-61 each contribute to the phycourobilin site. Asn-72 carries the N4-methylasparagine modification. Positions 82 and 158 each coordinate (2R,3E)-phycoerythrobilin.

The protein belongs to the phycobiliprotein family. In terms of assembly, heterodimer of an alpha and a beta chain. Post-translationally, contains two covalently linked phycoerythrobilin chromophores and one covalently linked phycourobilin chromophore.

Its subcellular location is the plastid. It localises to the chloroplast thylakoid membrane. Its function is as follows. Light-harvesting photosynthetic bile pigment-protein from the phycobiliprotein complex. The polypeptide is R-phycoerythrin beta chain (cpeB) (Porphyra purpurea (Red seaweed)).